Here is a 654-residue protein sequence, read N- to C-terminus: Periplasmic beta-glucosidase/beta-xylosidase (654 aa).

The signal sequence occupies residues 1–25 (MEKSATRQKALLIALPLLFSPLASA). Active-site residues include D235 and D360.

Belongs to the glycosyl hydrolase 3 family.

It is found in the periplasm. It carries out the reaction Hydrolysis of terminal, non-reducing beta-D-glucosyl residues with release of beta-D-glucose.. The catalysed reaction is Hydrolysis of (1-&gt;4)-beta-D-xylans, to remove successive D-xylose residues from the non-reducing termini.. Functionally, exhibits both beta-glucosidase and beta-xylosidase activities. This chain is Periplasmic beta-glucosidase/beta-xylosidase (bgxA), found in Dickeya chrysanthemi (Pectobacterium chrysanthemi).